An 82-amino-acid chain; its full sequence is RNA-binding protein KhpA (82 aa).

Residues 35-82 (STILELRVSQSDVGKIIGRRGRIARAIRTLLGACAAKTNRRVQLEILD) form the KH domain.

It belongs to the KhpA RNA-binding protein family. As to quaternary structure, forms a complex with KhpB.

It is found in the cytoplasm. Its function is as follows. A probable RNA chaperone. Forms a complex with KhpB which binds to cellular RNA and controls its expression. Plays a role in peptidoglycan (PG) homeostasis and cell length regulation. In Borreliella burgdorferi (strain ATCC 35210 / DSM 4680 / CIP 102532 / B31) (Borrelia burgdorferi), this protein is RNA-binding protein KhpA.